We begin with the raw amino-acid sequence, 169 residues long: S-ribosylhomocysteine lyase (169 aa).

Fe cation-binding residues include His54, His58, and Cys128.

The protein belongs to the LuxS family. Homodimer. Requires Fe cation as cofactor.

The enzyme catalyses S-(5-deoxy-D-ribos-5-yl)-L-homocysteine = (S)-4,5-dihydroxypentane-2,3-dione + L-homocysteine. Functionally, involved in the synthesis of autoinducer 2 (AI-2) which is secreted by bacteria and is used to communicate both the cell density and the metabolic potential of the environment. The regulation of gene expression in response to changes in cell density is called quorum sensing. Catalyzes the transformation of S-ribosylhomocysteine (RHC) to homocysteine (HC) and 4,5-dihydroxy-2,3-pentadione (DPD). The sequence is that of S-ribosylhomocysteine lyase from Shewanella sediminis (strain HAW-EB3).